The following is a 409-amino-acid chain: MSASPPSFLHSLKRLSLVTQIVIGLIAGIALALLAPEVAKSTTFIGKVFVSALKAVAPILVFVLVMASIANHKHGQETHIRPILVLYLLGTFAAAVVAVIASSLFPSALVLSTHDVAISAPGGITEVLQSLLLSVVDNPVSALMNANFIGILAWAIGMGVAIRHAGETTRTVLDDLSNGVTVIVRVVIRFAPLGIFGLVASTLATSGFNALLGYLHLLAVLIGCMLFVALVMNPLIVFWKIRRNPFPLVLTCLRESGITAFFTRSSAANIPVNLELSKRLGLHEDTYSVSIPLGATINMAGAAITITVLTLAAVHTLGIAVDLPTAVLLSVVAAICACGASGVAGGSLLLIPLACSLFGIPSEIAMQVVAVGFIIGVLQDSAETALNSSTDVLFTAAACMAQEDKAQAA.

9 consecutive transmembrane segments (helical) span residues Leu15–Ala35, Phe49–Ile69, Pro82–Ser102, Ala142–Ile162, Leu193–Gly213, Leu218–Phe238, Gly301–Val321, Val331–Ile351, and Leu357–Val377.

This sequence belongs to the dicarboxylate/amino acid:cation symporter (DAACS) (TC 2.A.23) family.

The protein resides in the cell inner membrane. The enzyme catalyses L-serine(in) + Na(+)(in) = L-serine(out) + Na(+)(out). The catalysed reaction is L-threonine(in) + Na(+)(in) = L-threonine(out) + Na(+)(out). Involved in the import of serine and threonine into the cell, with the concomitant import of sodium (symport system). The sequence is that of Serine/threonine transporter SstT from Pseudomonas fluorescens (strain ATCC BAA-477 / NRRL B-23932 / Pf-5).